Reading from the N-terminus, the 254-residue chain is Imidazole glycerol phosphate synthase subunit HisF (254 aa).

Catalysis depends on residues D11 and D130.

This sequence belongs to the HisA/HisF family. Heterodimer of HisH and HisF.

It is found in the cytoplasm. It carries out the reaction 5-[(5-phospho-1-deoxy-D-ribulos-1-ylimino)methylamino]-1-(5-phospho-beta-D-ribosyl)imidazole-4-carboxamide + L-glutamine = D-erythro-1-(imidazol-4-yl)glycerol 3-phosphate + 5-amino-1-(5-phospho-beta-D-ribosyl)imidazole-4-carboxamide + L-glutamate + H(+). Its pathway is amino-acid biosynthesis; L-histidine biosynthesis; L-histidine from 5-phospho-alpha-D-ribose 1-diphosphate: step 5/9. In terms of biological role, IGPS catalyzes the conversion of PRFAR and glutamine to IGP, AICAR and glutamate. The HisF subunit catalyzes the cyclization activity that produces IGP and AICAR from PRFAR using the ammonia provided by the HisH subunit. This Halorhodospira halophila (strain DSM 244 / SL1) (Ectothiorhodospira halophila (strain DSM 244 / SL1)) protein is Imidazole glycerol phosphate synthase subunit HisF.